Here is a 207-residue protein sequence, read N- to C-terminus: Small ribosomal subunit protein uS4A (207 aa).

The S4 RNA-binding domain maps to 98 to 163 (TRLDNLVYRL…SPKFKELKEN (66 aa)).

Belongs to the universal ribosomal protein uS4 family. As to quaternary structure, part of the 30S ribosomal subunit. Contacts protein S5. The interaction surface between S4 and S5 is involved in control of translational fidelity.

Its function is as follows. One of the primary rRNA binding proteins, it binds directly to 16S rRNA where it nucleates assembly of the body of the 30S subunit. Functionally, with S5 and S12 plays an important role in translational accuracy. The chain is Small ribosomal subunit protein uS4A from Alkaliphilus metalliredigens (strain QYMF).